Consider the following 154-residue polypeptide: Protein disulfide-isomerase LQY1, chloroplastic (154 aa).

A chloroplast-targeting transit peptide spans 1–43; sequence MPVSAPSPPRLHSPFIHCPINFTPSSFSARNLRSPSTSYPRIK. Residues 51–71 form a helical membrane-spanning segment; the sequence is VVAISVGVASVALGIGIPVFY. Residues 77–147 form a CR-type zinc finger; it reads NAAKRENTQP…SGVQPRYLDR (71 aa). Positions 87, 90, 98, 101, 121, 124, 132, and 135 each coordinate Zn(2+).

Belongs to the BSD2 chaperone family. As to quaternary structure, interacts with the photosystem II core subunits. Interacts with HHL1. Requires Zn(2+) as cofactor.

Its subcellular location is the plastid. It is found in the chloroplast thylakoid membrane. The catalysed reaction is Catalyzes the rearrangement of -S-S- bonds in proteins.. Its function is as follows. Protein disulfide-isomerase probably involved upon formation of a complex with HHL1 in maintaining photosystem II (PSII) activity under high light by regulating repair and reassembly of PSII complexes. The protein is Protein disulfide-isomerase LQY1, chloroplastic of Arabidopsis thaliana (Mouse-ear cress).